A 247-amino-acid chain; its full sequence is tRNA pseudouridine synthase A (247 aa).

The active-site Nucleophile is aspartate 58. Tyrosine 116 is a substrate binding site.

Belongs to the tRNA pseudouridine synthase TruA family. Homodimer.

The catalysed reaction is uridine(38/39/40) in tRNA = pseudouridine(38/39/40) in tRNA. Its function is as follows. Formation of pseudouridine at positions 38, 39 and 40 in the anticodon stem and loop of transfer RNAs. The chain is tRNA pseudouridine synthase A from Hydrogenobaculum sp. (strain Y04AAS1).